The sequence spans 409 residues: Multidrug resistance protein MdtG (409 aa).

Transmembrane regions (helical) follow at residues 16 to 36, 58 to 78, 92 to 112, 115 to 135, 146 to 166, 173 to 193, 224 to 244, 256 to 276, 291 to 311, and 379 to 399; these read LIVA…VMPF, IVFS…GGLA, LGMG…QFLI, ALLG…ATQV, TLST…GLLA, PVFF…LFCI, LFVT…ILTL, VAFI…LLSA, ILIT…YVQT, and AVFL…WNSL.

The protein belongs to the major facilitator superfamily. DHA1 family. MdtG (TC 2.A.1.2.20) subfamily.

The protein localises to the cell inner membrane. Confers resistance to fosfomycin and deoxycholate. The protein is Multidrug resistance protein MdtG of Escherichia coli O9:H4 (strain HS).